The sequence spans 155 residues: uncharacterized protein (155 aa).

The N-acetyltransferase domain maps to 6-155; that stretch reads LRIELGEETN…RDMVRLYLDL (150 aa). CoA is bound by residues 69–71, 77–82, and 111–117; these read IAV, KKGFGK, and QLSLYQK.

Its function is as follows. Probable N-acetyltransferase. This is an uncharacterized protein from Bacillus subtilis (strain 168).